We begin with the raw amino-acid sequence, 247 residues long: Uroporphyrinogen-III C-methyltransferase (247 aa).

Residues proline 12, 117 to 118 (TA), methionine 168, alanine 197, and alanine 225 each bind S-adenosyl-L-homocysteine.

Belongs to the precorrin methyltransferase family.

The enzyme catalyses uroporphyrinogen III + 2 S-adenosyl-L-methionine = precorrin-2 + 2 S-adenosyl-L-homocysteine + H(+). Its pathway is cofactor biosynthesis; adenosylcobalamin biosynthesis; precorrin-2 from uroporphyrinogen III: step 1/1. It participates in porphyrin-containing compound metabolism; siroheme biosynthesis; precorrin-2 from uroporphyrinogen III: step 1/1. Catalyzes the two successive C-2 and C-7 methylation reactions involved in the conversion of uroporphyrinogen III to precorrin-2 via the intermediate formation of precorrin-1. It is a step in the biosynthesis of both cobalamin (vitamin B12) and siroheme. This chain is Uroporphyrinogen-III C-methyltransferase, found in Pseudomonas fluorescens.